The sequence spans 247 residues: MQYGTKLAEGKTKIIYAHPEDQSLAYMVQKDSISAGDGARRNEIDGKGAISGRTSANVFALLNRSGVRTHYQSDPEPGVMLVERCEMLPLEVVMRRLATGSYCRRHPETPEGTRFSPPLVEFFYKDDANHDPQIYLEGIVEKGLATAEEVSFIEQEGTRVFELLEQTWAERGVQLVDLKIEFGRTADGSLIVADMIDNDSWRLWPDGDKSKMLDKQIYRNLQTVTEEALQNLKAKYEEVRDITESFR.

The protein belongs to the SAICAR synthetase family.

It carries out the reaction 5-amino-1-(5-phospho-D-ribosyl)imidazole-4-carboxylate + L-aspartate + ATP = (2S)-2-[5-amino-1-(5-phospho-beta-D-ribosyl)imidazole-4-carboxamido]succinate + ADP + phosphate + 2 H(+). The protein operates within purine metabolism; IMP biosynthesis via de novo pathway; 5-amino-1-(5-phospho-D-ribosyl)imidazole-4-carboxamide from 5-amino-1-(5-phospho-D-ribosyl)imidazole-4-carboxylate: step 1/2. This chain is Phosphoribosylaminoimidazole-succinocarboxamide synthase, found in Herpetosiphon aurantiacus (strain ATCC 23779 / DSM 785 / 114-95).